A 302-amino-acid chain; its full sequence is Sulfate adenylyltransferase subunit 2 (302 aa).

The protein belongs to the PAPS reductase family. CysD subfamily. In terms of assembly, heterodimer composed of CysD, the smaller subunit, and CysN.

It catalyses the reaction sulfate + ATP + H(+) = adenosine 5'-phosphosulfate + diphosphate. The protein operates within sulfur metabolism; hydrogen sulfide biosynthesis; sulfite from sulfate: step 1/3. Its function is as follows. With CysN forms the ATP sulfurylase (ATPS) that catalyzes the adenylation of sulfate producing adenosine 5'-phosphosulfate (APS) and diphosphate, the first enzymatic step in sulfur assimilation pathway. APS synthesis involves the formation of a high-energy phosphoric-sulfuric acid anhydride bond driven by GTP hydrolysis by CysN coupled to ATP hydrolysis by CysD. The sequence is that of Sulfate adenylyltransferase subunit 2 from Citrobacter koseri (strain ATCC BAA-895 / CDC 4225-83 / SGSC4696).